Reading from the N-terminus, the 497-residue chain is G protein-coupled receptor gprM (497 aa).

The N-linked (GlcNAc...) asparagine glycan is linked to Asn3. The next 5 membrane-spanning stretches (helical) occupy residues 66–86 (ISVA…VLPV), 98–118 (FTLG…PLGV), 138–158 (CAFT…WSFL), 179–199 (WGAL…MLIL), and 221–241 (YWIP…ATMA). Asn259 is a glycosylation site (N-linked (GlcNAc...) asparagine). A run of 2 helical transmembrane segments spans residues 293 to 313 (VTLV…FIEL) and 357 to 377 (LLLA…ILFA). Asn421 is a glycosylation site (N-linked (GlcNAc...) asparagine). The segment at 428-497 (YKSPSPMVRS…APAVYREYDD (70 aa)) is disordered.

The protein belongs to the G-protein coupled receptor GPR1/git3 family. As to quaternary structure, interacts with gpaA.

It is found in the cell membrane. In terms of biological role, g protein-coupled receptor that plays a role in conidiation and regulation of the biosynthesis of secondary metabolites such as dihydroxynaphthalene (DHN)-melanin, via interaction with the G-protein complex alpha subunit gpaA. This Aspergillus fumigatus (strain CBS 144.89 / FGSC A1163 / CEA10) (Neosartorya fumigata) protein is G protein-coupled receptor gprM.